The primary structure comprises 46 residues: Antimicrobial peptide eNAP-2 (46 aa).

The 35-residue stretch at 12–46 folds into the WAP domain; the sequence is RPGRCPTVPPGTFGHCACLCTGDASEPKGQKCCSN.

Functionally, has antibiotic activity against several equine uterine pathogens; S.zooepidemicus, E.coli and P.aeruginosa. Highly efficient against S.zoopedemicus. Not active against K.pneumoniae. Selectively inactivates microbial serine proteases (subtilisin A and proteinase K) without inhibiting mammalian serine proteases (human neutrophil elastase, human cathepsin G and bovine pancreatic trypsin). In Equus caballus (Horse), this protein is Antimicrobial peptide eNAP-2.